A 403-amino-acid polypeptide reads, in one-letter code: Lissencephaly-1 homolog 1 (403 aa).

The LisH domain maps to glutamine 7–aspartate 38. The stretch at asparagine 51–serine 87 forms a coiled coil. 7 WD repeats span residues glycine 103–threonine 142, glycine 145–threonine 184, glycine 187–threonine 226, glutamate 229–serine 270, glycine 271–threonine 327, glycine 330–lysine 369, and alanine 373–serine 403.

Belongs to the WD repeat LIS1/nudF family.

The protein localises to the cytoplasm. Its subcellular location is the cytoskeleton. The protein resides in the microtubule organizing center. It localises to the centrosome. Its function is as follows. Positively regulates the activity of the minus-end directed microtubule motor protein dynein. May enhance dynein-mediated microtubule sliding by targeting dynein to the microtubule plus end. Required for several dynein- and microtubule-dependent processes. In Paramecium tetraurelia, this protein is Lissencephaly-1 homolog 1.